The following is a 307-amino-acid chain: Putative flagellar export/assembly protein LafU (307 aa).

A helical transmembrane segment spans residues 32–54; sequence AWKVAFADFTLAMMALFMTLWIV. The tract at residues 87–108 is disordered; sequence SPSHPPKPATVAAPEETEKKAR. An OmpA-like domain is found at 154-272; that stretch reads LRVLIKDDQN…RIEIMVLTKS (119 aa).

This sequence belongs to the MotB family.

It is found in the cell inner membrane. Part of the flagellar gene cluster Flag-2. However, the Flag-2 flagellar system could be inactive in strain 042 due to a frameshift in lfgC. The chain is Putative flagellar export/assembly protein LafU from Escherichia coli O44:H18 (strain 042 / EAEC).